We begin with the raw amino-acid sequence, 282 residues long: Probable protein phosphatase 2C 45 (282 aa).

One can recognise a PPM-type phosphatase domain in the interval 27-272; the sequence is SYGYASSPGK…DNITCVVVRF (246 aa). The Mn(2+) site is built by aspartate 63, glycine 64, aspartate 224, and aspartate 263.

The protein belongs to the PP2C family. It depends on Mg(2+) as a cofactor. The cofactor is Mn(2+).

The catalysed reaction is O-phospho-L-seryl-[protein] + H2O = L-seryl-[protein] + phosphate. It carries out the reaction O-phospho-L-threonyl-[protein] + H2O = L-threonyl-[protein] + phosphate. The chain is Probable protein phosphatase 2C 45 from Oryza sativa subsp. japonica (Rice).